The sequence spans 180 residues: Adenine phosphoribosyltransferase (180 aa).

Ala2 carries the post-translational modification N-acetylalanine. Phosphoserine occurs at positions 4, 15, and 30. Position 60 is a phosphotyrosine (Tyr60). Residue Ser66 is modified to Phosphoserine. Lys114 is subject to N6-acetyllysine. Thr135 carries the phosphothreonine modification.

This sequence belongs to the purine/pyrimidine phosphoribosyltransferase family. As to quaternary structure, homodimer.

It localises to the cytoplasm. It carries out the reaction AMP + diphosphate = 5-phospho-alpha-D-ribose 1-diphosphate + adenine. Its pathway is purine metabolism; AMP biosynthesis via salvage pathway; AMP from adenine: step 1/1. Functionally, catalyzes a salvage reaction resulting in the formation of AMP, that is energically less costly than de novo synthesis. This chain is Adenine phosphoribosyltransferase, found in Homo sapiens (Human).